The chain runs to 286 residues: Pantothenate synthetase (286 aa).

30–37 (MGALHEGH) contacts ATP. The Proton donor role is filled by His37. Residue Gln61 coordinates (R)-pantoate. Gln61 is a beta-alanine binding site. 147–150 (GEKD) lines the ATP pocket. Gln153 lines the (R)-pantoate pocket. ATP contacts are provided by residues Leu176 and 184 to 187 (HSSR).

It belongs to the pantothenate synthetase family. In terms of assembly, homodimer.

It is found in the cytoplasm. It catalyses the reaction (R)-pantoate + beta-alanine + ATP = (R)-pantothenate + AMP + diphosphate + H(+). It participates in cofactor biosynthesis; (R)-pantothenate biosynthesis; (R)-pantothenate from (R)-pantoate and beta-alanine: step 1/1. Functionally, catalyzes the condensation of pantoate with beta-alanine in an ATP-dependent reaction via a pantoyl-adenylate intermediate. This is Pantothenate synthetase from Bartonella tribocorum (strain CIP 105476 / IBS 506).